We begin with the raw amino-acid sequence, 282 residues long: NADPH-dependent 7-cyano-7-deazaguanine reductase (282 aa).

A substrate-binding site is contributed by 90–92 (IES). Position 92–93 (92–93 (SK)) interacts with NADPH. C190 acts as the Thioimide intermediate in catalysis. The active-site Proton donor is the D197. Residue 229–230 (HE) participates in substrate binding. NADPH is bound at residue 258–259 (RG).

It belongs to the GTP cyclohydrolase I family. QueF type 2 subfamily. As to quaternary structure, homodimer.

The protein resides in the cytoplasm. The enzyme catalyses 7-aminomethyl-7-carbaguanine + 2 NADP(+) = 7-cyano-7-deazaguanine + 2 NADPH + 3 H(+). It participates in tRNA modification; tRNA-queuosine biosynthesis. Catalyzes the NADPH-dependent reduction of 7-cyano-7-deazaguanine (preQ0) to 7-aminomethyl-7-deazaguanine (preQ1). In Aeromonas salmonicida (strain A449), this protein is NADPH-dependent 7-cyano-7-deazaguanine reductase.